The chain runs to 332 residues: DNA-directed RNA polymerase subunit alpha (332 aa).

An alpha N-terminal domain (alpha-NTD) region spans residues 1 to 244 (MKKHAKVYYS…AHLNLLADVE (244 aa)). An alpha C-terminal domain (alpha-CTD) region spans residues 259–332 (IKEEPIRRFS…NYKNENKGEN (74 aa)).

This sequence belongs to the RNA polymerase alpha chain family. In terms of assembly, homodimer. The RNAP catalytic core consists of 2 alpha, 1 beta, 1 beta' and 1 omega subunit. When a sigma factor is associated with the core the holoenzyme is formed, which can initiate transcription.

It carries out the reaction RNA(n) + a ribonucleoside 5'-triphosphate = RNA(n+1) + diphosphate. DNA-dependent RNA polymerase catalyzes the transcription of DNA into RNA using the four ribonucleoside triphosphates as substrates. In Mesomycoplasma hyopneumoniae (strain 7448) (Mycoplasma hyopneumoniae), this protein is DNA-directed RNA polymerase subunit alpha.